The following is a 472-amino-acid chain: Eukaryotic translation initiation factor 2 subunit 3 (472 aa).

At Ala2 the chain carries N-acetylalanine. Ser16 is modified (phosphoserine). One can recognise a tr-type G domain in the interval 39–248 (QATINIGTIG…IVKKIPVPPR (210 aa)). The tract at residues 48–55 (GHVAHGKS) is G1. 51–56 (AHGKST) contributes to the GTP binding site. A G2 region spans residues 76-80 (NITIK). Positions 134–137 (DCPG) are G3. GTP is bound by residues 190-193 (NKID) and 225-227 (SAQ). The interval 190–193 (NKID) is G4. A G5 region spans residues 225 to 227 (SAQ). Residues 457 to 469 (GQIRRGVTIKPTV) are interacts with CDC123.

This sequence belongs to the TRAFAC class translation factor GTPase superfamily. Classic translation factor GTPase family. EIF2G subfamily. In terms of assembly, eukaryotic translation initiation factor 2 eIF2 is a heterotrimeric complex composed of an alpha (EIF2S1), a beta (EIF2S2) and a gamma (EIF2S3) chain. eIF2 is member of the 43S pre-initiation complex (43S PIC). Interacts (via C-terminus) with CDC123; the interaction is direct.

The protein resides in the cytoplasm. It is found in the cytosol. The catalysed reaction is GTP + H2O = GDP + phosphate + H(+). In terms of biological role, member of the eIF2 complex that functions in the early steps of protein synthesis by forming a ternary complex with GTP and initiator tRNA. This complex binds to a 40S ribosomal subunit, followed by mRNA binding to form the 43S pre-initiation complex (43S PIC). Junction of the 60S ribosomal subunit to form the 80S initiation complex is preceded by hydrolysis of the GTP bound to eIF2 and release of an eIF2-GDP binary complex. In order for eIF2 to recycle and catalyze another round of initiation, the GDP bound to eIF2 must exchange with GTP by way of a reaction catalyzed by eIF-2B. The sequence is that of Eukaryotic translation initiation factor 2 subunit 3 (EIF2S3) from Sus scrofa (Pig).